The primary structure comprises 1193 residues: Pyruvate carboxylase (1193 aa).

A Biotin carboxylation domain is found at 41 to 493; the sequence is QFQKILVANR…WTTFIDDTTE (453 aa). Residues lysine 159, glutamate 243, and histidine 278 each contribute to the ATP site. An ATP-grasp domain is found at 163-360; that stretch reads RQLAIRCNVP…IVAAQIQIAA (198 aa). The active site involves arginine 335. The 269-residue stretch at 579 to 847 folds into the Pyruvate carboxyltransferase domain; that stretch reads CLIMDTTWRD…DPGLNSAHVR (269 aa). Residues 587-591 and arginine 660 each bind substrate; that span reads RDAHQ. Aspartate 588 lines the a divalent metal cation pocket. A divalent metal cation-binding residues include lysine 756, histidine 786, and histidine 788. An N6-carboxylysine modification is found at lysine 756. Threonine 921 provides a ligand contact to substrate. A Biotinyl-binding domain is found at 1116–1191; that stretch reads KADVGDSSQV…DGQDLVCKIT (76 aa). Position 1157 is an N6-biotinyllysine (lysine 1157).

Biotin is required as a cofactor. The cofactor is Zn(2+).

The protein resides in the cytoplasm. It carries out the reaction hydrogencarbonate + pyruvate + ATP = oxaloacetate + ADP + phosphate + H(+). It functions in the pathway carbohydrate biosynthesis; gluconeogenesis. Pyruvate carboxylase catalyzes a 2-step reaction, involving the ATP-dependent carboxylation of the covalently attached biotin in the first step and the transfer of the carboxyl group to pyruvate in the second. This chain is Pyruvate carboxylase (pyc), found in Aspergillus terreus (strain NIH 2624 / FGSC A1156).